The sequence spans 576 residues: Arginine--tRNA ligase (576 aa).

A 'HIGH' region motif is present at residues 126 to 136; sequence ANPTGPMHIGH.

This sequence belongs to the class-I aminoacyl-tRNA synthetase family. Monomer.

The protein localises to the cytoplasm. It catalyses the reaction tRNA(Arg) + L-arginine + ATP = L-arginyl-tRNA(Arg) + AMP + diphosphate. The sequence is that of Arginine--tRNA ligase from Rickettsia felis (strain ATCC VR-1525 / URRWXCal2) (Rickettsia azadi).